We begin with the raw amino-acid sequence, 232 residues long: RNA chaperone ProQ (232 aa).

Residues Glu-105–Asp-182 form a disordered region. Positions Gln-117–Arg-136 are enriched in basic and acidic residues. The segment covering Arg-137–Pro-146 has biased composition (basic residues). Over residues Arg-147–His-177 the composition is skewed to basic and acidic residues.

It belongs to the ProQ family.

The protein resides in the cytoplasm. In terms of biological role, RNA chaperone with significant RNA binding, RNA strand exchange and RNA duplexing activities. May regulate ProP activity through an RNA-based, post-transcriptional mechanism. This chain is RNA chaperone ProQ, found in Shigella flexneri serotype 5b (strain 8401).